Here is a 264-residue protein sequence, read N- to C-terminus: Forkhead box protein pes-1 (264 aa).

Disordered regions lie at residues 15-36 (DLDN…GNSK) and 50-93 (DSST…PTKR). The segment covering 50–64 (DSSTSSSCSVSPASS) has biased composition (low complexity). Residues 70 to 89 (ESVGQQQSGRNSPVSSSTES) are compositionally biased toward polar residues. A DNA-binding region (fork-head) is located at residues 93–186 (RPKYSYNALI…ISNNCGKLRR (94 aa)).

The protein resides in the nucleus. Its subcellular location is the cytoplasm. Functionally, transcription factor. Plays a role in embryogenesis and later development, perhaps acting redundantly with forkhead protein fkh-2. The polypeptide is Forkhead box protein pes-1 (Caenorhabditis elegans).